Consider the following 249-residue polypeptide: MEWYWIGLLIVVVLFLLSAVRIVKEYERGVIFRLGRLVGARGPGLFFIIPILENMVVVDLRTVTYDVPSQEVVTKDNVTVKVNAVVYYRVVDPAKAVTEVFDYQYATAQLAQTTLRSIIGQAELDEVLSERDKLNVKLQQIIDEETNPWGIKVTAVEIKDVELPEEMRRIMAMQAEAERERRSKIIRAEGEYQAAMKLREAADVLAQSEGAILLRYLQTLNEISAEQNTTIVMPIPVELLKFFVEKAKS.

Residues tryptophan 3–valine 23 traverse the membrane as a helical segment.

The protein belongs to the band 7/mec-2 family.

It localises to the membrane. This is an uncharacterized protein from Archaeoglobus fulgidus (strain ATCC 49558 / DSM 4304 / JCM 9628 / NBRC 100126 / VC-16).